The primary structure comprises 484 residues: Chromosomal replication initiator protein DnaA (484 aa).

The tract at residues M1–T73 is domain I, interacts with DnaA modulators. The domain II stretch occupies residues T73–P140. Positions F141 to I357 are domain III, AAA+ region. 4 residues coordinate ATP: G185, G187, K188, and T189. A domain IV, binds dsDNA region spans residues D358 to N484.

Belongs to the DnaA family. As to quaternary structure, oligomerizes as a right-handed, spiral filament on DNA at oriC.

The protein localises to the cytoplasm. In terms of biological role, plays an essential role in the initiation and regulation of chromosomal replication. ATP-DnaA binds to the origin of replication (oriC) to initiate formation of the DNA replication initiation complex once per cell cycle. Binds the DnaA box (a 9 base pair repeat at the origin) and separates the double-stranded (ds)DNA. Forms a right-handed helical filament on oriC DNA; dsDNA binds to the exterior of the filament while single-stranded (ss)DNA is stabiized in the filament's interior. The ATP-DnaA-oriC complex binds and stabilizes one strand of the AT-rich DNA unwinding element (DUE), permitting loading of DNA polymerase. After initiation quickly degrades to an ADP-DnaA complex that is not apt for DNA replication. Binds acidic phospholipids. This is Chromosomal replication initiator protein DnaA from Borrelia turicatae (strain 91E135).